Consider the following 307-residue polypeptide: Serine/threonine-protein phosphatase PP2A-1 catalytic subunit (307 aa).

4 residues coordinate Mn(2+): Asp54, His56, Asp82, and Asn114. The active-site Proton donor is His115. The Mn(2+) site is built by His164 and His238. The tract at residues 286 to 307 (FEPAPRRGAEGEVNRRTPDYFL) is disordered. A compositionally biased stretch (basic and acidic residues) spans 289–307 (APRRGAEGEVNRRTPDYFL).

This sequence belongs to the PPP phosphatase family. PP-2A subfamily. It depends on Mn(2+) as a cofactor.

The catalysed reaction is O-phospho-L-seryl-[protein] + H2O = L-seryl-[protein] + phosphate. It carries out the reaction O-phospho-L-threonyl-[protein] + H2O = L-threonyl-[protein] + phosphate. The chain is Serine/threonine-protein phosphatase PP2A-1 catalytic subunit from Acetabularia peniculus (Green alga).